We begin with the raw amino-acid sequence, 339 residues long: Diguanylate cyclase VdcA (339 aa).

Positions 206–339 (QQVSLIMLDI…NLGRNRVMPL (134 aa)) constitute a GGDEF domain. Residue Asp214 participates in Mg(2+) binding. Positions 222 and 231 each coordinate substrate. Glu257 lines the Mg(2+) pocket. Glu257 acts as the Proton acceptor in catalysis.

It depends on Mg(2+) as a cofactor.

The catalysed reaction is 2 GTP = 3',3'-c-di-GMP + 2 diphosphate. Its pathway is purine metabolism; 3',5'-cyclic di-GMP biosynthesis. In terms of biological role, diguanylate cyclase (DGC) that catalyzes the synthesis of cyclic diguanylate (c-di-GMP) via the condensation of 2 GTP molecules. Is involved in the modulation of intracellular c-di-GMP levels. Cyclic-di-GMP is a second messenger which positively regulates biofilm formation and negatively regulates virulence in V.cholerae, and is proposed to play an important role in the transition from persistence in the environment to survival in the host. Overexpression of vdcA results in increased biofilm formation, and reduced motility and virulence. This is Diguanylate cyclase VdcA (vdcA) from Vibrio cholerae serotype O1 (strain ATCC 39315 / El Tor Inaba N16961).